The sequence spans 114 residues: TYRO protein tyrosine kinase-binding protein (114 aa).

The first 27 residues, 1–27 (MGAPEPSWCFLFLPVLLTVGGLSPVQA), serve as a signal peptide directing secretion. Residues 28–42 (QSDNYPGCECSSVSP) lie on the Extracellular side of the membrane. The chain crosses the membrane as a helical span at residues 43–63 (GVLAGIVLGDLVLTLLIALAV). Residue aspartate 52 participates in Ca(2+) binding. The Cytoplasmic portion of the chain corresponds to 64–114 (YSLGRLVSRGRGTADGTRKQHMAETESPYQELQGQRPEVYSDLNTQRQYYR). Positions 72 to 114 (RGRGTADGTRKQHMAETESPYQELQGQRPEVYSDLNTQRQYYR) are disordered. Residues 81–109 (RKQHMAETESPYQELQGQRPEVYSDLNTQ) form the ITAM domain. 2 positions are modified to phosphotyrosine: tyrosine 92 and tyrosine 103. Over residues 105 to 114 (DLNTQRQYYR) the composition is skewed to polar residues.

Belongs to the TYROBP family. Homodimer; disulfide-linked. Homotrimer; disulfide-linked. Homotetramer; disulfide-linked. Homotrimers and homotetramers form when low levels of partner receptors are available and is competitive with assembly with interacting receptors. They may represent alternative oligomerization states or may be intermediates in the receptor assembly process. Binding of a metal cation aids in homooligomerization through coordination of the metal ion by the subunits of the oligomer. Interacts with TREM1. Interacts with TREM2. Interacts with CLECSF5. Interacts with CD300LB and CD300C2. Interacts with CD300E. Interacts (via ITAM domain) with SYK (via SH2 domains); activates SYK mediating neutrophils and macrophages integrin-mediated activation. Interacts with KLRC2. Interacts with CD300H. Interacts with KLRD1. Interacts with SIGLEC1. In terms of processing, following ligand binding by associated receptors, tyrosine phosphorylated in the ITAM domain which leads to activation of additional tyrosine kinases and subsequent cell activation.

It is found in the cell membrane. Functionally, adapter protein which non-covalently associates with activating receptors found on the surface of a variety of immune cells to mediate signaling and cell activation following ligand binding by the receptors. TYROBP is tyrosine-phosphorylated in the ITAM domain following ligand binding by the associated receptors which leads to activation of additional tyrosine kinases and subsequent cell activation. Also has an inhibitory role in some cells. Non-covalently associates with activating receptors of the CD300 family to mediate cell activation. Also mediates cell activation through association with activating receptors of the CD200R family. Required for neutrophil activation mediated by integrin. Required for the activation of myeloid cells mediated by the CLEC5A/MDL1 receptor. Associates with natural killer (NK) cell receptors such as the KLRD1/KLRC2 heterodimer to mediate NK cell activation. Associates with TREM1 to mediate activation of neutrophils and monocytes. Associates with TREM2 on monocyte-derived dendritic cells to mediate up-regulation of chemokine receptor CCR7 and dendritic cell maturation and survival. PAssociation with TREM2 mediates cytokine-induced formation of multinucleated giant cells which are formed by the fusion of macrophages. Stabilizes the TREM2 C-terminal fragment (TREM2-CTF) produced by TREM2 ectodomain shedding which suppresses the release of pro-inflammatory cytokines. In microglia, required with TREM2 for phagocytosis of apoptotic neurons. Required with ITGAM/CD11B in microglia to control production of microglial superoxide ions which promote the neuronal apoptosis that occurs during brain development. Promotes pro-inflammatory responses in microglia following nerve injury which accelerates degeneration of injured neurons. ositively regulates the expression of the IRAK3/IRAK-M kinase and IL10 production by liver dendritic cells and inhibits their T cell allosimulatory ability. Negatively regulates B cell proliferation. Required for CSF1-mediated osteoclast cytoskeletal organization. Positively regulates multinucleation during osteoclast development. In Rattus norvegicus (Rat), this protein is TYRO protein tyrosine kinase-binding protein.